The chain runs to 207 residues: Large ribosomal subunit protein bL25 (207 aa).

Positions 186 to 207 are disordered; sequence SKPRGGAGAEGEADAEGEAAAE. Acidic residues predominate over residues 196–207; that stretch reads GEADAEGEAAAE.

This sequence belongs to the bacterial ribosomal protein bL25 family. CTC subfamily. As to quaternary structure, part of the 50S ribosomal subunit; part of the 5S rRNA/L5/L18/L25 subcomplex. Contacts the 5S rRNA. Binds to the 5S rRNA independently of L5 and L18.

In terms of biological role, this is one of the proteins that binds to the 5S RNA in the ribosome where it forms part of the central protuberance. The chain is Large ribosomal subunit protein bL25 from Methylobacillus flagellatus (strain ATCC 51484 / DSM 6875 / VKM B-1610 / KT).